The following is a 403-amino-acid chain: MTIPISEQIEIIKRGCSELLLEDELEQKLAQNRPLRIKAGFDPTAPDLHLGHTVLLNKMRHLQDLGHHALFLIGDFTGMIGDPSGKNTTRPPLSREQVAENAKSYQDQVFRILKPEQTEVVFNSAWMDRLNAADLIKLAATHTVARMLERDDFGKRYQSNKPIAIHEFLYPLIQGYDSVALRADIELGGTDQKFNLLMGRELQKHFGQASQCVITMPLLEGLDGVNKMSKSAGNYIGITESPGNMFGKLMSISDELMWRYIELLSFEPLRVVRQWQQDVGNGRNPRDIKVLFAQEIVTRFHSRQDAEAALADFESRFRRGGIPDDLPENILQAGKEGLPIAQLLKQTGLTASTTEALRMIEQGGVKLNGEKVSDKTFRLSCGQMVIVQVGKRKFARVTICEEK.

The 'HIGH' region motif lies at 43–52; that stretch reads PTAPDLHLGH. The 'KMSKS' region motif lies at 227 to 231; the sequence is KMSKS. Lys-230 provides a ligand contact to ATP. The S4 RNA-binding domain maps to 338–399; the sequence is LPIAQLLKQT…GKRKFARVTI (62 aa).

Belongs to the class-I aminoacyl-tRNA synthetase family. TyrS type 2 subfamily. As to quaternary structure, homodimer.

It is found in the cytoplasm. The enzyme catalyses tRNA(Tyr) + L-tyrosine + ATP = L-tyrosyl-tRNA(Tyr) + AMP + diphosphate + H(+). Functionally, catalyzes the attachment of tyrosine to tRNA(Tyr) in a two-step reaction: tyrosine is first activated by ATP to form Tyr-AMP and then transferred to the acceptor end of tRNA(Tyr). The polypeptide is Tyrosine--tRNA ligase (Nitrosospira multiformis (strain ATCC 25196 / NCIMB 11849 / C 71)).